Consider the following 684-residue polypeptide: Sorbicillinoid biosynthetic cluster transcription factor 2 (684 aa).

The interval 114-151 is disordered; it reads ISSAPSLETPPESVAASPPTVDSIPVSHHVNEDPEAEP.

It localises to the nucleus. In terms of biological role, transcription factor that acts in concert with sorR1 which is a transcriptional activator of the gene cluster that mediates the biosynthesis of sorbicillinoids, a diverse group of yellow secondary metabolites that restrict growth of competing pathogenic fungi but not of bacteria. This is Sorbicillinoid biosynthetic cluster transcription factor 2 from Penicillium rubens (strain ATCC 28089 / DSM 1075 / NRRL 1951 / Wisconsin 54-1255) (Penicillium chrysogenum).